Consider the following 123-residue polypeptide: Small ribosomal subunit protein uS12 (123 aa).

A 3-methylthioaspartic acid modification is found at aspartate 89.

The protein belongs to the universal ribosomal protein uS12 family. As to quaternary structure, part of the 30S ribosomal subunit. Contacts proteins S8 and S17. May interact with IF1 in the 30S initiation complex.

Functionally, with S4 and S5 plays an important role in translational accuracy. Interacts with and stabilizes bases of the 16S rRNA that are involved in tRNA selection in the A site and with the mRNA backbone. Located at the interface of the 30S and 50S subunits, it traverses the body of the 30S subunit contacting proteins on the other side and probably holding the rRNA structure together. The combined cluster of proteins S8, S12 and S17 appears to hold together the shoulder and platform of the 30S subunit. This is Small ribosomal subunit protein uS12 from Geotalea uraniireducens (strain Rf4) (Geobacter uraniireducens).